We begin with the raw amino-acid sequence, 106 residues long: Small ribosomal subunit protein uS10 (106 aa).

This sequence belongs to the universal ribosomal protein uS10 family. Part of the 30S ribosomal subunit.

In terms of biological role, involved in the binding of tRNA to the ribosomes. The chain is Small ribosomal subunit protein uS10 from Pyrobaculum aerophilum (strain ATCC 51768 / DSM 7523 / JCM 9630 / CIP 104966 / NBRC 100827 / IM2).